The chain runs to 566 residues: Oxygen-dependent choline dehydrogenase (566 aa).

7 to 36 provides a ligand contact to FAD; it reads DYIICGAGSAGNVLATRLTEDPDVTVLLLE. The tract at residues 180–202 is disordered; sequence NGYQQEGFGPMDRTVTPKGRRAS. The active-site Proton acceptor is the His474.

This sequence belongs to the GMC oxidoreductase family. FAD is required as a cofactor.

It carries out the reaction choline + A = betaine aldehyde + AH2. The catalysed reaction is betaine aldehyde + NAD(+) + H2O = glycine betaine + NADH + 2 H(+). It functions in the pathway amine and polyamine biosynthesis; betaine biosynthesis via choline pathway; betaine aldehyde from choline (cytochrome c reductase route): step 1/1. Its function is as follows. Involved in the biosynthesis of the osmoprotectant glycine betaine. Catalyzes the oxidation of choline to betaine aldehyde and betaine aldehyde to glycine betaine at the same rate. This Burkholderia orbicola (strain MC0-3) protein is Oxygen-dependent choline dehydrogenase.